The following is a 184-amino-acid chain: Probable RNA 2'-phosphotransferase (184 aa).

It belongs to the KptA/TPT1 family.

Its function is as follows. Removes the 2'-phosphate from RNA via an intermediate in which the phosphate is ADP-ribosylated by NAD followed by a presumed transesterification to release the RNA and generate ADP-ribose 1''-2''-cyclic phosphate (APPR&gt;P). May function as an ADP-ribosylase. This Rhizobium johnstonii (strain DSM 114642 / LMG 32736 / 3841) (Rhizobium leguminosarum bv. viciae) protein is Probable RNA 2'-phosphotransferase.